A 133-amino-acid polypeptide reads, in one-letter code: Ribosome-binding factor A (133 aa).

Belongs to the RbfA family. In terms of assembly, monomer. Binds 30S ribosomal subunits, but not 50S ribosomal subunits or 70S ribosomes.

The protein resides in the cytoplasm. Functionally, one of several proteins that assist in the late maturation steps of the functional core of the 30S ribosomal subunit. Associates with free 30S ribosomal subunits (but not with 30S subunits that are part of 70S ribosomes or polysomes). Required for efficient processing of 16S rRNA. May interact with the 5'-terminal helix region of 16S rRNA. The polypeptide is Ribosome-binding factor A (Pseudomonas fluorescens (strain Pf0-1)).